The primary structure comprises 154 residues: Myoglobin (154 aa).

Residues 2-148 form the Globin domain; sequence GLSEAEWQLV…FRKDIAAKYK (147 aa). A Phosphoserine modification is found at serine 4. Histidine 65 contributes to the nitrite binding site. O2 is bound at residue histidine 65. Threonine 68 is modified (phosphothreonine). Heme b is bound at residue histidine 94.

Belongs to the globin family. In terms of assembly, monomeric.

It localises to the cytoplasm. The protein resides in the sarcoplasm. The enzyme catalyses Fe(III)-heme b-[protein] + nitric oxide + H2O = Fe(II)-heme b-[protein] + nitrite + 2 H(+). It carries out the reaction H2O2 + AH2 = A + 2 H2O. Functionally, monomeric heme protein which primary function is to store oxygen and facilitate its diffusion within muscle tissues. Reversibly binds oxygen through a pentacoordinated heme iron and enables its timely and efficient release as needed during periods of heightened demand. Depending on the oxidative conditions of tissues and cells, and in addition to its ability to bind oxygen, it also has a nitrite reductase activity whereby it regulates the production of bioactive nitric oxide. Under stress conditions, like hypoxia and anoxia, it also protects cells against reactive oxygen species thanks to its pseudoperoxidase activity. The protein is Myoglobin (MB) of Indopacetus pacificus (Longman's beaked whale).